The primary structure comprises 228 residues: MIPRVIRLWLPSALFLSQVPGCVPLHGPSTITGAVGESLSVSCQYEEKFKTKDKFWCRGSLKVLCKDIVKTSSSEEVRNGRVTIRDHPDNLTFTVTYESLTLEDADTYMCAVDISLFDGSLGFDKYFKIELSVVPSEDPVTGSSLESGRDILESPTSSVGHTHPSVTTDDTIPAPCPQPRSLRSSLYFWVLVSLKLFLFLSMLGAVLWVNRPQRCSGGSSSRPCYENQ.

Positions 1–24 (MIPRVIRLWLPSALFLSQVPGCVP) are cleaved as a signal peptide. The region spanning 25 to 126 (LHGPSTITGA…FDGSLGFDKY (102 aa)) is the Ig-like V-type domain. Residues 25–187 (LHGPSTITGA…QPRSLRSSLY (163 aa)) lie on the Extracellular side of the membrane. Cys43 and Cys110 are disulfide-bonded. Asn90 carries N-linked (GlcNAc...) asparagine glycosylation. Residues 139–174 (PVTGSSLESGRDILESPTSSVGHTHPSVTTDDTIPA) are disordered. Residues 154–170 (SPTSSVGHTHPSVTTDD) are compositionally biased toward polar residues. Residues 188-208 (FWVLVSLKLFLFLSMLGAVLW) traverse the membrane as a helical segment. At 209–228 (VNRPQRCSGGSSSRPCYENQ) the chain is on the cytoplasmic side.

This sequence belongs to the CD300 family. Interacts with TYROBP, HCST and FcR gamma. Present on the surface of mast cells, dendritic cells, peritoneal macrophages and a subset of B-cells (at protein level).

It is found in the cell membrane. Its function is as follows. Acts as an activating receptor in mast cells and macrophages. This chain is CMRF-35-like molecule 4, found in Mus musculus (Mouse).